The following is a 365-amino-acid chain: tRNA 2-selenouridine synthase (365 aa).

Residues 12 to 136 (FLHDVPLLDV…LRMFLIDTTQ (125 aa)) form the Rhodanese domain. Cys-95 (S-selanylcysteine intermediate) is an active-site residue.

Belongs to the SelU family. As to quaternary structure, monomer.

The enzyme catalyses 5-methylaminomethyl-2-thiouridine(34) in tRNA + selenophosphate + (2E)-geranyl diphosphate + H2O + H(+) = 5-methylaminomethyl-2-selenouridine(34) in tRNA + (2E)-thiogeraniol + phosphate + diphosphate. It carries out the reaction 5-methylaminomethyl-2-thiouridine(34) in tRNA + (2E)-geranyl diphosphate = 5-methylaminomethyl-S-(2E)-geranyl-thiouridine(34) in tRNA + diphosphate. The catalysed reaction is 5-methylaminomethyl-S-(2E)-geranyl-thiouridine(34) in tRNA + selenophosphate + H(+) = 5-methylaminomethyl-2-(Se-phospho)selenouridine(34) in tRNA + (2E)-thiogeraniol. It catalyses the reaction 5-methylaminomethyl-2-(Se-phospho)selenouridine(34) in tRNA + H2O = 5-methylaminomethyl-2-selenouridine(34) in tRNA + phosphate. In terms of biological role, involved in the post-transcriptional modification of the uridine at the wobble position (U34) of tRNA(Lys), tRNA(Glu) and tRNA(Gln). Catalyzes the conversion of 2-thiouridine (S2U-RNA) to 2-selenouridine (Se2U-RNA). Acts in a two-step process involving geranylation of 2-thiouridine (S2U) to S-geranyl-2-thiouridine (geS2U) and subsequent selenation of the latter derivative to 2-selenouridine (Se2U) in the tRNA chain. This chain is tRNA 2-selenouridine synthase, found in Verminephrobacter eiseniae (strain EF01-2).